A 195-amino-acid chain; its full sequence is Imidazole glycerol phosphate synthase subunit HisH (195 aa).

Residues 1-195 form the Glutamine amidotransferase type-1 domain; sequence MIAVVDLGIG…LRLLENFRRL (195 aa). The Nucleophile role is filled by C72. Residues H177 and E179 contribute to the active site.

In terms of assembly, heterodimer of HisH and HisF.

It localises to the cytoplasm. It catalyses the reaction 5-[(5-phospho-1-deoxy-D-ribulos-1-ylimino)methylamino]-1-(5-phospho-beta-D-ribosyl)imidazole-4-carboxamide + L-glutamine = D-erythro-1-(imidazol-4-yl)glycerol 3-phosphate + 5-amino-1-(5-phospho-beta-D-ribosyl)imidazole-4-carboxamide + L-glutamate + H(+). The catalysed reaction is L-glutamine + H2O = L-glutamate + NH4(+). Its pathway is amino-acid biosynthesis; L-histidine biosynthesis; L-histidine from 5-phospho-alpha-D-ribose 1-diphosphate: step 5/9. Its function is as follows. IGPS catalyzes the conversion of PRFAR and glutamine to IGP, AICAR and glutamate. The HisH subunit catalyzes the hydrolysis of glutamine to glutamate and ammonia as part of the synthesis of IGP and AICAR. The resulting ammonia molecule is channeled to the active site of HisF. This chain is Imidazole glycerol phosphate synthase subunit HisH, found in Thermococcus kodakarensis (strain ATCC BAA-918 / JCM 12380 / KOD1) (Pyrococcus kodakaraensis (strain KOD1)).